A 153-amino-acid polypeptide reads, in one-letter code: Large ribosomal subunit protein uL22 (153 aa).

Residues 128-153 (ADRRARRAAAKPAASASPAANEGVPA) form a disordered region. Low complexity predominate over residues 137-147 (AKPAASASPAA).

This sequence belongs to the universal ribosomal protein uL22 family. As to quaternary structure, part of the 50S ribosomal subunit.

In terms of biological role, this protein binds specifically to 23S rRNA; its binding is stimulated by other ribosomal proteins, e.g. L4, L17, and L20. It is important during the early stages of 50S assembly. It makes multiple contacts with different domains of the 23S rRNA in the assembled 50S subunit and ribosome. The globular domain of the protein is located near the polypeptide exit tunnel on the outside of the subunit, while an extended beta-hairpin is found that lines the wall of the exit tunnel in the center of the 70S ribosome. This is Large ribosomal subunit protein uL22 from Acidiphilium cryptum (strain JF-5).